The chain runs to 190 residues: Cysteine dioxygenase (190 aa).

Residues histidine 78, histidine 80, and histidine 132 each contribute to the Fe cation site. Positions 85-149 (CFVKILDGEL…SNGAVSLHLY (65 aa)) form a cross-link, 3'-(S-cysteinyl)-tyrosine (Cys-Tyr).

Belongs to the cysteine dioxygenase family. It depends on Fe cation as a cofactor. In terms of processing, the thioether cross-link between Cys-85 and Tyr-149 plays a structural role through stabilizing the Fe(2+) ion, and prevents the production of highly damaging free hydroxyl radicals by holding the oxygen radical via hydroxyl hydrogen.

The enzyme catalyses L-cysteine + O2 = 3-sulfino-L-alanine + H(+). It participates in organosulfur biosynthesis; taurine biosynthesis; hypotaurine from L-cysteine: step 1/2. In Caenorhabditis briggsae, this protein is Cysteine dioxygenase (cdo-1).